The following is a 139-amino-acid chain: GSK3B-interacting protein (139 aa).

The tract at residues valine 41–leucine 45 is required for PRKAR2A interaction; contributes to a protective effect against H(2)O(2)-induced apoptosis. The segment at serine 115–serine 139 is interaction with GSK3B and acts as a GSK3B inhibitor.

Belongs to the GSKIP family. As to quaternary structure, forms a complex composed of PRKAR2A or PRKAR2B, GSK3B and GSKIP through GSKIP interaction; facilitates PKA-induced phosphorylation of GSK3B leading to GSK3B inactivation; recruits DNM1L through GSK3B for PKA-mediated phosphorylation of DNM1L; promotes beta-catenin degradation through GSK3B-induced phosphorylation of beta-catenin; stabilizes beta-catenin and enhances Wnt-induced signaling through PKA-induced phosphorylation of beta-catenin. Interacts with GSK3B; induces GSK3B-mediated phosphorylation of GSKIP and inhibits GSK3B kinase activity. Post-translationally, phosphorylated by GSK3B.

It localises to the cytoplasm. The protein localises to the nucleus. Its function is as follows. A-kinase anchoring protein for GSK3B and PKA that regulates or facilitates their kinase activity towards their targets. The ternary complex enhances Wnt-induced signaling by facilitating the GSK3B- and PKA-induced phosphorylation of beta-catenin leading to beta-catenin degradation and stabilization respectively. Upon cAMP activation, the ternary complex contributes to neuroprotection against oxidative stress-induced apoptosis by facilitating the PKA-induced phosphorylation of DML1 and PKA-induced inactivation of GSK3B. During neurite outgrowth promotes neuron proliferation; while increases beta-catenin-induced transcriptional activity through GSK3B kinase activity inhibition, reduces N-cadherin level to promote cell cycle progression. May play a role in cleft palate formation and is required for postnatal life through modulation of the activity of GSK3B during development. In Bos taurus (Bovine), this protein is GSK3B-interacting protein.